A 252-amino-acid chain; its full sequence is Serine/threonine phosphatase stp (252 aa).

Basic and acidic residues predominate over residues 1–18; that stretch reads MHAEFRTDRGRIRHHNED. The tract at residues 1 to 23 is disordered; it reads MHAEFRTDRGRIRHHNEDNGGVF. Residues 2 to 242 form the PPM-type phosphatase domain; it reads HAEFRTDRGR…DNITVLLVER (241 aa). Mn(2+) is bound by residues D36, G37, D194, and D233.

This sequence belongs to the PP2C family. Requires Mn(2+) as cofactor.

The protein resides in the cytoplasm. It localises to the membrane. It catalyses the reaction O-phospho-L-seryl-[protein] + H2O = L-seryl-[protein] + phosphate. It carries out the reaction O-phospho-L-threonyl-[protein] + H2O = L-threonyl-[protein] + phosphate. Activity not affected by inhibitors of phosphatases of the PPP family such as okadaic acid and cypermethrin, or by inhibitors of phosphatases of the PTP family such as sodium orthovanadate. Functionally, protein phosphatase that dephosphorylates EF-Tu. The chain is Serine/threonine phosphatase stp (stp) from Listeria monocytogenes serovar 1/2a (strain ATCC BAA-679 / EGD-e).